We begin with the raw amino-acid sequence, 239 residues long: MTLALQYKRILLKVSGEALMGGQSFGIDVSVADRIAADIAEVRAIGVEVAIVIGGGNIFRGVAVASHGGDRVTGDHMGMLATAINSLALRTSLTKLGVETVVLSAIAMPQICESFSQRKAIGYMNQGRVVIFAGGTGNPFFTTDSAATLRAAEIGADVLLKGTQVDGIYSADPKTDPTAKRFDRLTHVEILQRGLSVMDTTAVTLARENNVPIIVYSIHEKSGLAKVLNGTGRFTIVSE.

13–16 (KVSG) serves as a coordination point for ATP. Residue glycine 55 coordinates UMP. Residues glycine 56 and arginine 60 each coordinate ATP. Residues aspartate 75 and 136-143 (TGNPFFTT) contribute to the UMP site. Residues threonine 163, glutamine 164, tyrosine 169, and aspartate 172 each coordinate ATP.

It belongs to the UMP kinase family. In terms of assembly, homohexamer.

Its subcellular location is the cytoplasm. The catalysed reaction is UMP + ATP = UDP + ADP. It functions in the pathway pyrimidine metabolism; CTP biosynthesis via de novo pathway; UDP from UMP (UMPK route): step 1/1. With respect to regulation, inhibited by UTP. Catalyzes the reversible phosphorylation of UMP to UDP. The sequence is that of Uridylate kinase from Bartonella henselae (strain ATCC 49882 / DSM 28221 / CCUG 30454 / Houston 1) (Rochalimaea henselae).